Consider the following 224-residue polypeptide: Putative MgpC-like protein MPN_150 (224 aa).

The protein belongs to the MgpC family.

The chain is Putative MgpC-like protein MPN_150 from Mycoplasma pneumoniae (strain ATCC 29342 / M129 / Subtype 1) (Mycoplasmoides pneumoniae).